The sequence spans 186 residues: uncharacterized protein (186 aa).

Disordered stretches follow at residues 17–47 (LSGESEEDLAEERENPALVGSETAEPTEETF), 77–105 (EDKLLPSEPCADHPLAARPPSQAAAAAEA), and 121–164 (QQAA…PVAG). A compositionally biased stretch (low complexity) spans 90–105 (PLAARPPSQAAAAAEA). Positions 136–149 (PEPDPEPADEAAEE) are enriched in acidic residues.

This is an uncharacterized protein from Homo sapiens (Human).